The sequence spans 530 residues: 2,3-bisphosphoglycerate-independent phosphoglycerate mutase (530 aa).

Positions 15 and 65 each coordinate Mn(2+). Ser-65 (phosphoserine intermediate) is an active-site residue. Substrate is bound by residues His-126, 155-156 (RD), Arg-187, Arg-193, 257-260 (RPDR), and Lys-330. Asp-397, His-401, Asp-438, His-439, and His-456 together coordinate Mn(2+).

Belongs to the BPG-independent phosphoglycerate mutase family. In terms of assembly, monomer. The cofactor is Mn(2+).

It carries out the reaction (2R)-2-phosphoglycerate = (2R)-3-phosphoglycerate. It functions in the pathway carbohydrate degradation; glycolysis; pyruvate from D-glyceraldehyde 3-phosphate: step 3/5. Its function is as follows. Catalyzes the interconversion of 2-phosphoglycerate and 3-phosphoglycerate. The protein is 2,3-bisphosphoglycerate-independent phosphoglycerate mutase of Synechococcus sp. (strain JA-2-3B'a(2-13)) (Cyanobacteria bacterium Yellowstone B-Prime).